Reading from the N-terminus, the 229-residue chain is Trehalose-6-phosphate phosphatase-related protein (229 aa).

The active-site Nucleophile is the aspartate 5. 3 residues coordinate Mg(2+): aspartate 5, aspartate 7, and aspartate 177. 5–7 (DYD) contributes to the substrate binding site.

Belongs to the trehalose phosphatase family. The cofactor is Mg(2+).

It catalyses the reaction alpha,alpha-trehalose 6-phosphate + H2O = alpha,alpha-trehalose + phosphate. The protein operates within glycan biosynthesis; trehalose biosynthesis. In terms of biological role, removes the phosphate from trehalose 6-phosphate (Tre6P) to produce free trehalose. Also catalyzes the dephosphorylation of para-nitrophenyl phosphate (pNPP), but with lesser efficiency (in vitro). This Thermoplasma acidophilum (strain ATCC 25905 / DSM 1728 / JCM 9062 / NBRC 15155 / AMRC-C165) protein is Trehalose-6-phosphate phosphatase-related protein.